The sequence spans 97 residues: Co-chaperonin GroES (97 aa).

It belongs to the GroES chaperonin family. As to quaternary structure, heptamer of 7 subunits arranged in a ring. Interacts with the chaperonin GroEL.

The protein localises to the cytoplasm. Its function is as follows. Together with the chaperonin GroEL, plays an essential role in assisting protein folding. The GroEL-GroES system forms a nano-cage that allows encapsulation of the non-native substrate proteins and provides a physical environment optimized to promote and accelerate protein folding. GroES binds to the apical surface of the GroEL ring, thereby capping the opening of the GroEL channel. This chain is Co-chaperonin GroES, found in Blochmanniella floridana.